Here is a 212-residue protein sequence, read N- to C-terminus: MAMKSVAVLTKGMFGRIPAQLAVSSVPSNTIQKRSNYKFVGMPNETDGTLAGDLNYGLHNVFFTELFRGFGVMLGHVFMEPATINYPFEKGPLSSRFRGEHALRRYPSGEERCIACKLCEAICPAQAITIEAETRPDGSRRTTRYDIDMTKCIYCGLCQEACPVDAIVEGPNFEYSTETHEELLYNKEKLLLNGDRWEPELASNLQAEYLYR.

4Fe-4S ferredoxin-type domains lie at 104–133 (RRYP…IEAE) and 143–172 (TRYD…EGPN). [4Fe-4S] cluster is bound by residues Cys113, Cys116, Cys119, Cys123, Cys152, Cys155, Cys158, and Cys162.

It belongs to the complex I 23 kDa subunit family. Complex I is composed of 45 different subunits This is a component of the iron-sulfur (IP) fragment of the enzyme. Requires [4Fe-4S] cluster as cofactor.

It localises to the mitochondrion. The catalysed reaction is a ubiquinone + NADH + 5 H(+)(in) = a ubiquinol + NAD(+) + 4 H(+)(out). Its function is as follows. Core subunit of the mitochondrial membrane respiratory chain NADH dehydrogenase (Complex I) that is believed to belong to the minimal assembly required for catalysis. Complex I functions in the transfer of electrons from NADH to the respiratory chain. The immediate electron acceptor for the enzyme is believed to be ubiquinone. The polypeptide is Probable NADH dehydrogenase [ubiquinone] iron-sulfur protein 8, mitochondrial (Caenorhabditis elegans).